A 475-amino-acid polypeptide reads, in one-letter code: Ankyrin repeat, SAM and basic leucine zipper domain-containing protein 1 (475 aa).

Residues M1–A10 show a composition bias toward low complexity. A disordered region spans residues M1 to G24. Phosphoserine occurs at positions 17, 18, and 20. ANK repeat units lie at residues E45–S74, Y78–F107, D110–V144, R148–T177, S181–L210, and D214–G243. Residues S272–D334 form the SAM domain.

As to quaternary structure, interacts with DDX4, PIWIL1, RANBP9 and TDRD1.

The protein resides in the cytoplasm. In terms of biological role, plays a central role during spermatogenesis by repressing transposable elements and preventing their mobilization, which is essential for the germline integrity. Acts via the piRNA metabolic process, which mediates the repression of transposable elements during meiosis by forming complexes composed of piRNAs and Piwi proteins and governs the methylation and subsequent repression of transposons. Its association with pi-bodies suggests a participation in the primary piRNAs metabolic process. Required prior to the pachytene stage to facilitate the production of multiple types of piRNAs, including those associated with repeats involved in the regulation of retrotransposons. May act by mediating protein-protein interactions during germ cell maturation. This chain is Ankyrin repeat, SAM and basic leucine zipper domain-containing protein 1 (ASZ1), found in Carollia perspicillata (Seba's short-tailed bat).